The primary structure comprises 129 residues: MELKGRSISKGIIEGIAIVSKKPFSFLGGVDEEGNIIDKDSDLYGQSLKGKIFVFPYGRGSTVGSYVIYGLAKRGILKGIVNKECEPIVATGAILGGIPLVDKIDIEEIKTGDRIVVDGNTGVVKILNK.

Serine 61 (proton acceptor) is an active-site residue.

This sequence belongs to the AcnX type II small subunit family. In terms of assembly, heterodimer composed of a large subunit (PMDh-L) and a small subunit (PMDh-S).

The catalysed reaction is (R)-5-phosphomevalonate = (2E)-3-methyl-5-phosphooxypent-2-enoate + H2O. It participates in isoprenoid biosynthesis; isopentenyl diphosphate biosynthesis via mevalonate pathway. Its function is as follows. Component of a hydro-lyase that catalyzes the dehydration of mevalonate 5-phosphate (MVA5P) to form trans-anhydromevalonate 5-phosphate (tAHMP). Involved in the archaeal mevalonate (MVA) pathway, which provides fundamental precursors for isoprenoid biosynthesis, such as isopentenyl diphosphate (IPP) and dimethylallyl diphosphate (DMAPP). This chain is Phosphomevalonate dehydratase small subunit, found in Methanocaldococcus jannaschii (strain ATCC 43067 / DSM 2661 / JAL-1 / JCM 10045 / NBRC 100440) (Methanococcus jannaschii).